An 814-amino-acid polypeptide reads, in one-letter code: Tax1-binding protein 1 homolog (814 aa).

Phosphoserine is present on residues S124, S138, and S225. Residues 144-623 (TTKAGLLELK…KELTKSLEDQ (480 aa)) are a coiled coil. The segment at 320–420 (EEISKLQSCL…ELQLHAVKKD (101 aa)) is oligomerization. S619 carries the post-translational modification Phosphoserine; by IKKA. S632 bears the Phosphoserine mark. Phosphoserine; by IKKA is present on S693. Residues 701–733 (SQPARNLSRPDGLEDPEDSREDENVPIPPDPAN) form a disordered region. 2 consecutive UBZ1-type zinc fingers follow at residues 752-778 (HKKC…VESH) and 779-805 (WKVC…VQTH). Zn(2+) contacts are provided by C755, C758, H774, H778, C782, C785, H801, and H805.

Homooligomer. Interacts with TNFAIP3. Interacts with STARD13. Interacts with MYO6. Interacts with TOM1; the interaction is indirect and is mediated by MYO6, which acts as a bridge between TOM1 and TAX1BP1. Interacts with MAVS; this interaction induces MAVS polyubiquitination. Interacts with TNIP1. Interacts with TRAF6; this interaction mediates deubiquitination of TRAF6 and inhibition of NF-kappa-B activation. Interacts with RIPK1; this interaction negatively regulates RIPK1 ubiquitination. Interacts with NBR1. Interacts with TBK1. Interacts with RB1CC1. Interacts with SQSTM1. Interacts with AZI2. Interacts with TICAM1 and TRIM32; these interactions target TICAM1 to TAX1BP1-mediated selective autophagic degradation. In terms of processing, phosphorylated in the C-terminal region by CHUK/IKKA leading to NF-kappa-B signaling down-regulation.

It is found in the cytoplasm. The protein resides in the mitochondrion. The protein localises to the preautophagosomal structure. It localises to the cytoplasmic vesicle. Its subcellular location is the autophagosome. Functionally, ubiquitin-binding adapter that participates in inflammatory, antiviral and innate immune processes as well as selective autophagy regulation. Plays a key role in the negative regulation of NF-kappa-B and IRF3 signalings by acting as an adapter for the ubiquitin-editing enzyme A20/TNFAIP3 to bind and inactivate its substrates. Disrupts the interactions between the E3 ubiquitin ligase TRAF3 and TBK1/IKBKE to attenuate 'Lys63'-linked polyubiquitination of TBK1 and thereby IFN-beta production. Also recruits A20/TNFAIP3 to ubiquitinated signaling proteins TRAF6 and RIPK1, leading to their deubiquitination and disruption of IL-1 and TNF-induced NF-kappa-B signaling pathways. Inhibits virus-induced apoptosis by inducing the 'Lys-48'-linked polyubiquitination and degradation of MAVS via recruitment of the E3 ligase ITCH, thereby attenuating MAVS-mediated apoptosis signaling. As a macroautophagy/autophagy receptor, facilitates the xenophagic clearance of pathogenic bacteria such as Salmonella typhimurium and Mycobacterium tuberculosis. Upon NBR1 recruitment to the SQSTM1-ubiquitin condensates, acts as the major recruiter of RB1CC1 to these ubiquitin condensates to promote their autophagic degradation. Mediates the autophagic degradation of other substrates including TICAM1. This is Tax1-binding protein 1 homolog (Tax1bp1) from Mus musculus (Mouse).